The chain runs to 574 residues: Craniofacial development protein 2 (574 aa).

Basic and acidic residues-rich tracts occupy residues 1–16 (MEEV…KAED), 23–37 (ECHE…KEDE), 45–55 (EQTKGIKRKAE), 86–111 (SEKE…KEDE), and 134–172 (TGEE…DRQQ). Disordered stretches follow at residues 1–222 (MEEV…PAVD) and 488–574 (TRPF…SGVF). The span at 199-208 (KTGTNASSKN) shows a compositional bias: polar residues. Residues 493 to 572 (GTNEADDTSE…AVPSLPAGSG (80 aa)) are hydrophilic. The span at 502–516 (EESKPSSEQKGKEKP) shows a compositional bias: basic and acidic residues. The span at 518 to 528 (ASVPSAVSSVP) shows a compositional bias: low complexity.

It is found in the cytoplasm. Its subcellular location is the nucleus. This Tragulus javanicus (Lesser Malay chevrotain) protein is Craniofacial development protein 2 (CFDP2).